The chain runs to 177 residues: ATP synthase subunit delta (177 aa).

The protein belongs to the ATPase delta chain family. As to quaternary structure, F-type ATPases have 2 components, F(1) - the catalytic core - and F(0) - the membrane proton channel. F(1) has five subunits: alpha(3), beta(3), gamma(1), delta(1), epsilon(1). F(0) has three main subunits: a(1), b(2) and c(10-14). The alpha and beta chains form an alternating ring which encloses part of the gamma chain. F(1) is attached to F(0) by a central stalk formed by the gamma and epsilon chains, while a peripheral stalk is formed by the delta and b chains.

The protein localises to the cell inner membrane. Functionally, f(1)F(0) ATP synthase produces ATP from ADP in the presence of a proton or sodium gradient. F-type ATPases consist of two structural domains, F(1) containing the extramembraneous catalytic core and F(0) containing the membrane proton channel, linked together by a central stalk and a peripheral stalk. During catalysis, ATP synthesis in the catalytic domain of F(1) is coupled via a rotary mechanism of the central stalk subunits to proton translocation. Its function is as follows. This protein is part of the stalk that links CF(0) to CF(1). It either transmits conformational changes from CF(0) to CF(1) or is implicated in proton conduction. The polypeptide is ATP synthase subunit delta (Shigella flexneri).